The chain runs to 605 residues: Indole-3-acetic acid-amido synthetase GH3.8 (605 aa).

AMP-binding positions include Ser115, 342–346 (MYASS), Tyr365, Asp421, and Arg440.

This sequence belongs to the IAA-amido conjugating enzyme family. In terms of tissue distribution, expressed in the inner floral organs (lodicules, stamens and carpels) and at lower levels in lemmas and paleas.

Catalyzes the synthesis of indole-3-acetic acid (IAA)-amino acid conjugates, providing a mechanism for the plant to cope with the presence of excessive free auxin. Produces more IAA-Asp levels than IAA-Ala levels in vitro. May participate in the activation of disease resistance by preventing the accumulation of free IAA, which reduces the expression of a group of auxin-responsive genes encoding expansins that control cell wall loosening and expansion. Contributes to late events in stamen and carpel differentiation, and influences floret fertility. The chain is Indole-3-acetic acid-amido synthetase GH3.8 (GH3.8) from Oryza sativa subsp. indica (Rice).